The following is a 429-amino-acid chain: Probable M18 family aminopeptidase 2 (429 aa).

Zn(2+) is bound by residues His82, His156, and His401.

It belongs to the peptidase M18 family. Zn(2+) serves as cofactor.

This is Probable M18 family aminopeptidase 2 from Pseudomonas fluorescens (strain SBW25).